Reading from the N-terminus, the 599-residue chain is Translation initiation factor IF-2 (599 aa).

A tr-type G domain is found at 111–278 (PRPPIITVMG…SILLLAEILE (168 aa)). The segment at 120 to 127 (GHVDHGKT) is G1. GTP is bound at residue 120-127 (GHVDHGKT). The tract at residues 145–149 (GITQH) is G2. Residues 166-169 (DTPG) form a G3 region. GTP is bound by residues 166–170 (DTPGH) and 220–223 (NKMD). Residues 220 to 223 (NKMD) are G4. The G5 stretch occupies residues 256 to 258 (SAL).

The protein belongs to the TRAFAC class translation factor GTPase superfamily. Classic translation factor GTPase family. IF-2 subfamily.

It is found in the cytoplasm. Functionally, one of the essential components for the initiation of protein synthesis. Protects formylmethionyl-tRNA from spontaneous hydrolysis and promotes its binding to the 30S ribosomal subunits. Also involved in the hydrolysis of GTP during the formation of the 70S ribosomal complex. This Mesomycoplasma hyopneumoniae (strain 232) (Mycoplasma hyopneumoniae) protein is Translation initiation factor IF-2.